Here is a 528-residue protein sequence, read N- to C-terminus: MLAMAASAEETNRQSNAGRRSVISPSEAPPEAEQSDVYQAPPPGLKEWLFILILCSTQLFVQGAFGYILIPLHIVGQTFGQGPSEATRMTWHVGGYSLTVGTFILIAGKLGDLYGSKRILVLGWAWFGVWSVIGGCSAFTHSPVFFDTARALQGIGPALLLPNALAIAGRTYPPGKKKNMIFSAFAVAAPLGCFTAGVVGSVFAQYVWWPWVMWTYSIGCFIIAAVGLWVIPSDYPRCQKAATLQFDYIGSVLGVAGLLLLNISWNQAPIDGWSTPYVYVLLIGGFLVLGLFELQERRAPGIRSWINFAMCLLWIQQCSSRQGPSQGILPALATPYLMAVITSGWLMAIACAAFLGGCILQSTAPVEQSYWMNTFWSFVIMAWGMDISFPASTTILSDAVPVKHQGASASLVNTVINYSIAIGLGIAGTVEAEVSHQGVNQLRGYRAALWSSVGLAALAFGIALVFAVCTFQEQRSSRKSSQEREQRACIEGCILGLTLTPDREWERVELGRLLSHVSQTGGLRSQSV.

The disordered stretch occupies residues 1 to 37; the sequence is MLAMAASAEETNRQSNAGRRSVISPSEAPPEAEQSDV. The next 7 helical transmembrane spans lie at 50 to 70, 91 to 111, 119 to 139, 149 to 169, 180 to 200, 211 to 231, and 241 to 261; these read FILI…YILI, WHVG…GKLG, ILVL…CSAF, ARAL…AIAG, MIFS…GVVG, WVMW…LWVI, and AATL…LLLL. Asn-262 carries N-linked (GlcNAc...) asparagine glycosylation. The next 5 helical transmembrane spans lie at 272 to 292, 340 to 360, 375 to 395, 410 to 430, and 448 to 468; these read GWST…LGLF, VITS…GCIL, FWSF…STTI, SLVN…AGTV, and ALWS…VFAV.

Belongs to the major facilitator superfamily.

Its subcellular location is the cell membrane. Functionally, major facilitator superfamily transporter that confers resistance to azoles such as itraconazole. This Aspergillus fumigatus (strain ATCC MYA-4609 / CBS 101355 / FGSC A1100 / Af293) (Neosartorya fumigata) protein is Major facilitator superfamily multidrug transporter mdr3.